We begin with the raw amino-acid sequence, 153 residues long: Small ribosomal subunit protein eS19 (153 aa).

Disordered regions lie at residues Tyr77–Gly99 and Gly113–Asp139. The span at Asn120 to Leu133 shows a compositional bias: basic and acidic residues.

The protein belongs to the eukaryotic ribosomal protein eS19 family. As to quaternary structure, part of the 30S ribosomal subunit.

Its function is as follows. May be involved in maturation of the 30S ribosomal subunit. In Haloarcula marismortui (strain ATCC 43049 / DSM 3752 / JCM 8966 / VKM B-1809) (Halobacterium marismortui), this protein is Small ribosomal subunit protein eS19.